Here is a 52-residue protein sequence, read N- to C-terminus: UPF0391 membrane protein ACIAD3602 (52 aa).

A run of 2 helical transmembrane segments spans residues 6 to 26 (IIFA…VAGL) and 30 to 50 (FAVI…ISRG).

The protein belongs to the UPF0391 family.

It localises to the cell membrane. This chain is UPF0391 membrane protein ACIAD3602, found in Acinetobacter baylyi (strain ATCC 33305 / BD413 / ADP1).